Consider the following 156-residue polypeptide: Small ribosomal subunit protein uS7 (156 aa).

Belongs to the universal ribosomal protein uS7 family. As to quaternary structure, part of the 30S ribosomal subunit. Contacts proteins S9 and S11.

Its function is as follows. One of the primary rRNA binding proteins, it binds directly to 16S rRNA where it nucleates assembly of the head domain of the 30S subunit. Is located at the subunit interface close to the decoding center, probably blocks exit of the E-site tRNA. In Mycobacterium tuberculosis (strain CDC 1551 / Oshkosh), this protein is Small ribosomal subunit protein uS7.